The chain runs to 535 residues: KNR4/SMI1 homolog (535 aa).

Residues 354–363 are compositionally biased toward basic and acidic residues; it reads ERKLPEEPKR. The disordered stretch occupies residues 354–535; the sequence is ERKLPEEPKR…LKDDFENVAL (182 aa). Composition is skewed to polar residues over residues 364-384, 397-407, and 456-469; these read TVSS…QETA, TSLSVDNTGTK, and ESTN…TSQE. A compositionally biased stretch (basic and acidic residues) spans 474–483; the sequence is TSEKPEEKPK. A compositionally biased stretch (basic residues) spans 484 to 494; it reads KQSKKASKKKG. 2 stretches are compositionally biased toward basic and acidic residues: residues 495 to 509 and 524 to 535; these read KKDE…TKEP and EKLKDDFENVAL.

This sequence belongs to the KNR4/SMI1 family.

The sequence is that of KNR4/SMI1 homolog from Kluyveromyces lactis (strain ATCC 8585 / CBS 2359 / DSM 70799 / NBRC 1267 / NRRL Y-1140 / WM37) (Yeast).